Consider the following 876-residue polypeptide: Valine--tRNA ligase (876 aa).

The 'HIGH' region signature appears at 44 to 54 (PNVTGKLHLGH). The short motif at 520–524 (KMSKS) is the 'KMSKS' region element. Lys-523 contacts ATP. The stretch at 805 to 876 (LEGLIDMDKE…VKNRIEQLKA (72 aa)) forms a coiled coil.

It belongs to the class-I aminoacyl-tRNA synthetase family. ValS type 1 subfamily. As to quaternary structure, monomer.

It localises to the cytoplasm. It catalyses the reaction tRNA(Val) + L-valine + ATP = L-valyl-tRNA(Val) + AMP + diphosphate. Its function is as follows. Catalyzes the attachment of valine to tRNA(Val). As ValRS can inadvertently accommodate and process structurally similar amino acids such as threonine, to avoid such errors, it has a 'posttransfer' editing activity that hydrolyzes mischarged Thr-tRNA(Val) in a tRNA-dependent manner. This chain is Valine--tRNA ligase, found in Staphylococcus haemolyticus (strain JCSC1435).